The following is a 601-amino-acid chain: Elongation factor 4 (601 aa).

Residues Asp7 to Lys189 enclose the tr-type G domain. GTP contacts are provided by residues Asp19–Thr24 and Asn136–Asp139.

It belongs to the TRAFAC class translation factor GTPase superfamily. Classic translation factor GTPase family. LepA subfamily.

It is found in the cell inner membrane. The enzyme catalyses GTP + H2O = GDP + phosphate + H(+). Required for accurate and efficient protein synthesis under certain stress conditions. May act as a fidelity factor of the translation reaction, by catalyzing a one-codon backward translocation of tRNAs on improperly translocated ribosomes. Back-translocation proceeds from a post-translocation (POST) complex to a pre-translocation (PRE) complex, thus giving elongation factor G a second chance to translocate the tRNAs correctly. Binds to ribosomes in a GTP-dependent manner. The protein is Elongation factor 4 of Methylobacterium nodulans (strain LMG 21967 / CNCM I-2342 / ORS 2060).